The sequence spans 115 residues: Ustilagic acid biosynthesis cluster protein orf3 (115 aa).

The first 38 residues, 1–38, serve as a signal peptide directing secretion; the sequence is MTYSKIACSLGKRGIARAPNQASSFFLLLFLFAKFSQQ. Positions 42–62 are disordered; it reads SPCLASSGVAKSRGPASTDRP.

Its pathway is secondary metabolite biosynthesis. In terms of biological role, part of the gene cluster that mediates the biosynthesis of the glycolipid biosurfactant ustilagic acid (UA). UA is a secreted cellobiose glycolipid that is toxic for many microorganisms and confers biocontrol activity to U.maydis. UA consists of 15,16-dihydroxypalmitic or 2,15,16-trihydroxypalmitic acid, which is O-glycosidically linked to cellobiose at its terminal hydroxyl group. In addition, the cellobiose moiety is acetylated and acylated with a short-chain hydroxy fatty acid. UA biosynthesis starts with omega-hydroxylation of palmitic acid catalyzed by the cytochrome P450 monooxygenase cyp1. Terminal hydroxylation of palmitic acid precedes subterminal hydroxylation catalyzed by the cytochrome P450 monooxygenase cyp2. Sequential glucosylation of the hydroxy fatty acid is probably catalyzed by the glycosyltransferase ugt1. The cellobiose lipid is further decorated by acetylation of the proximal glucose residue and by acylation with a short-chain beta-hydroxy fatty acid at the distal glucose residue. The acyltransferase uat1 may be a good candidate for catalyzing either acetylation or acylation of the cellobiose lipid. The fatty acid synthase fas2 may be involved in synthesis of the carbon backbone of the short-chain beta-hydroxy fatty acid esterified to the cellobiose disaccharide. The secreted UA consists of a mixture of both alpha-hydroxylated and non-hydroxylated glycolipids; therefore, alpha-hydroxylation of the long-chain fatty, catalyzed by the fatty acid hydroxylase ahd1, occurs late in UA biosynthesis and may be the last step before secretion. In Mycosarcoma maydis (Corn smut fungus), this protein is Ustilagic acid biosynthesis cluster protein orf3.